We begin with the raw amino-acid sequence, 283 residues long: MKEDNNTSEESGRINRRNVLKTVGAAGLFAAGSTGMAAAADSLSQAEEPKLLTGTEKRTLARELAKTPAFRELAQRARADGAQIRSDADSIVAGYARGEDFAREVVQYDLENLTDAAEASIVIGRNPETGEIEVANLDYYYETDDGVLDEVHRFEPTNASETDGVQSAATSDGATVIAVDTDAIREAQNSEIDVDESSPSNAAPTPADIDITGCSACKYAAGQVCTIGCSAAGGFICGLLGITIPVAGLSCLGFVEIVCTVADEYSGCGDAVAKEACNRAGLC.

Residues 1-40 (MKEDNNTSEESGRINRRNVLKTVGAAGLFAAGSTGMAAAA) constitute a signal peptide (tat-type signal). A helix-loop-helix (HLH) region region spans residues 61–75 (ARELAKTPAFRELAQ).

As to quaternary structure, immunity protein HalI interacts with Halocin-C8; the interaction is direct. Predicted to be exported by the Tat system. The position of the signal peptide cleavage has not been experimentally proven.

Its subcellular location is the secreted. It localises to the cell membrane. Its function is as follows. Has antibacterial activity against a wide variety of haloarchaeons. Causes cell lysis and death, possibly by disrupting the cell wall. Acts as an immunity protein for halocin-C8. Able to block the halocin-C8 activity by sequestering the activity of halocin-C8 through specific and direct binding. The polypeptide is Pre-protein-C8 (proC8) (Halobacterium sp. (strain AS7092)).